A 516-amino-acid chain; its full sequence is Putative Rieske 2Fe-2S iron-sulfur protein MT3926 (516 aa).

The Rieske domain occupies 429 to 516 (LYTFFKCLTD…RGHQLRSSRP (88 aa)). Cys469, His471, Cys489, and His492 together coordinate [2Fe-2S] cluster.

[2Fe-2S] cluster is required as a cofactor.

The chain is Putative Rieske 2Fe-2S iron-sulfur protein MT3926 from Mycobacterium tuberculosis (strain CDC 1551 / Oshkosh).